Here is a 240-residue protein sequence, read N- to C-terminus: Tetrahydromethanopterin S-methyltransferase subunit A (240 aa).

At 1–218 (MADKREPAPG…KFHSGVHAGK (218 aa)) the chain is on the cytoplasmic side. Residue histidine 85 participates in 5-hydroxybenzimidazolylcob(I)amide binding. Residues 219–239 (VEGAMIGLTITISLLGLLLLG) traverse the membrane as a helical segment. Arginine 240 is a topological domain (extracellular).

It belongs to the MtrA family. The complex is composed of 8 subunits; MtrA, MtrB, MtrC, MtrD, MtrE, MtrF, MtrG and MtrH. The cofactor is 5-hydroxybenzimidazolylcob(I)amide.

The protein resides in the cell membrane. The enzyme catalyses 5-methyl-5,6,7,8-tetrahydromethanopterin + coenzyme M + 2 Na(+)(in) = 5,6,7,8-tetrahydromethanopterin + methyl-coenzyme M + 2 Na(+)(out). It participates in one-carbon metabolism; methanogenesis from CO(2); methyl-coenzyme M from 5,10-methylene-5,6,7,8-tetrahydromethanopterin: step 2/2. Functionally, part of a complex that catalyzes the formation of methyl-coenzyme M and tetrahydromethanopterin from coenzyme M and methyl-tetrahydromethanopterin. This is an energy-conserving, sodium-ion translocating step. The polypeptide is Tetrahydromethanopterin S-methyltransferase subunit A (Methanosarcina mazei (strain ATCC BAA-159 / DSM 3647 / Goe1 / Go1 / JCM 11833 / OCM 88) (Methanosarcina frisia)).